The chain runs to 549 residues: MFS-type transporter TwmF (549 aa).

A run of 4 helical transmembrane segments spans residues 29–49, 63–83, 99–119, and 126–146; these read IVIG…VLTI, NFIW…PLFG, VAIF…AMLI, and GVGS…LVPL. Residue Asn151 is glycosylated (N-linked (GlcNAc...) asparagine). Transmembrane regions (helical) follow at residues 155–175, 182–202, 221–241, 249–269, 291–311, 328–348, 355–375, 390–410, 421–441, and 502–522; these read ILMS…GAIV, WVFY…FIFL, LVGN…LSYA, SWHT…FAGL, IILA…LFFL, VALL…AIAL, KPVH…FTLF, IVAF…QAFI, AWYF…AAIF, and VSIA…DVGL.

This sequence belongs to the major facilitator superfamily.

The protein localises to the membrane. MFS efflux transporter; part of the gene cluster that mediates the biosynthesis of wortmanamides A and B, reduced long-chain polyketides amidated with a specific omega-amino acid, 5-aminopentanoic acid (5PA). This chain is MFS-type transporter TwmF, found in Talaromyces wortmannii (Penicillium wortmannii).